Here is a 1031-residue protein sequence, read N- to C-terminus: Caprin-2 (1031 aa).

5 disordered regions span residues 1–27 (MKSA…QSTL), 364–458 (LQEE…SWEN), 500–520 (PKDV…LPKD), 605–658 (DQAS…SSEA), and 830–876 (RSGT…SMTP). Composition is skewed to polar residues over residues 425-439 (VSVQ…SWTT) and 446-458 (ASVQ…SWEN). The span at 608 to 646 (SSGSETEFTTSETPEMVVSPCKPKPASALASPNPPLSKS) shows a compositional bias: low complexity. The span at 830 to 853 (RSGTSSGLQANSRAGWSDSSQVSS) shows a compositional bias: polar residues. A phosphoserine mark is found at Ser852 and Ser853. The 135-residue stretch at 897 to 1031 (PQQMRVAFSA…TFSGYLLYQD (135 aa)) folds into the C1q domain. Asp982 and Glu988 together coordinate Ca(2+).

It belongs to the caprin family. Homotrimer; via C1q domain. Found in a complex with LRP6, CCNY and CDK14 during G2/M stage; CAPRIN2 functions as a scaffold for the complex by binding to CCNY via its N terminus and to CDK14 via its C terminus. Interacts with LRP5. Interacts with LRP6. Specifically expressed in brain (at protein level).

Its subcellular location is the cytoplasm. The protein localises to the cell membrane. In terms of biological role, promotes phosphorylation of the Wnt coreceptor LRP6, leading to increased activity of the canonical Wnt signaling pathway. Facilitates constitutive LRP6 phosphorylation by CDK14/CCNY during G2/M stage of the cell cycle, which may potentiate cells for Wnt signaling. May regulate the transport and translation of mRNAs, modulating for instance the expression of proteins involved in synaptic plasticity in neurons. Involved in regulation of growth as erythroblasts shift from a highly proliferative state towards their terminal phase of differentiation. May be involved in apoptosis. In Mus musculus (Mouse), this protein is Caprin-2.